Consider the following 206-residue polypeptide: Large ribosomal subunit protein bL25 (206 aa).

The disordered stretch occupies residues 184–206 (AEEAAAEVAEPEVIKKGKEEEEE). Basic and acidic residues predominate over residues 195–206 (EVIKKGKEEEEE).

Belongs to the bacterial ribosomal protein bL25 family. CTC subfamily. In terms of assembly, part of the 50S ribosomal subunit; part of the 5S rRNA/L5/L18/L25 subcomplex. Contacts the 5S rRNA. Binds to the 5S rRNA independently of L5 and L18.

In terms of biological role, this is one of the proteins that binds to the 5S RNA in the ribosome where it forms part of the central protuberance. This Thermus thermophilus (strain ATCC BAA-163 / DSM 7039 / HB27) protein is Large ribosomal subunit protein bL25.